An 85-amino-acid chain; its full sequence is uncharacterized protein (85 aa).

This is an uncharacterized protein from Saimiriine herpesvirus 2 (strain 488) (SaHV-2).